A 367-amino-acid polypeptide reads, in one-letter code: Adenosine deaminase (367 aa).

Zn(2+) contacts are provided by His-46 and His-48. Residues 48–50, Asp-176, and Gly-205 contribute to the a purine D-ribonucleoside site; that span reads HLD. Positions 174 to 188 are gating helix loop; regulates binding affinity for substrates and thus substrate selectivity; that stretch reads TGDGGLSHERMKEAA. Residue His-230 coordinates Zn(2+). A purine D-ribonucleoside-binding residues include Glu-233, His-257, and Asp-314. A Zn(2+)-binding site is contributed by Asp-314.

It belongs to the metallo-dependent hydrolases superfamily. Adenosine and AMP deaminases family. Requires Zn(2+) as cofactor.

It carries out the reaction adenosine + H2O + H(+) = inosine + NH4(+). The catalysed reaction is S-methyl-5'-thioadenosine + H2O + H(+) = S-methyl-5'-thioinosine + NH4(+). It participates in purine metabolism; purine nucleoside salvage. With respect to regulation, inhibited by coformycin and methylthiocoformycin (MT-coformycin). Catalyzes the hydrolytic deamination of adenosine to produce inosine. Unlike mammalian adenosine deaminases, also catalyzes the deamination of 5'-methylthioadenosine (MTA), a by-product of polyamine biosynthesis, to produce 5'-methylthioinosine (MTI). Plays an essential role in the purine salvage pathway which allows the parasite to use host cell purines for the synthesis of nucleic acids. This is Adenosine deaminase from Plasmodium falciparum (isolate 3D7).